Consider the following 226-residue polypeptide: 3-dehydroquinate dehydratase (226 aa).

3-dehydroquinate is bound by residues Ser-9, 32-34 (EVR), and Arg-59. Residue His-119 is the Proton donor/acceptor of the active site. Lys-146 functions as the Schiff-base intermediate with substrate in the catalytic mechanism. Residues Arg-187, Thr-208, and Gln-212 each contribute to the 3-dehydroquinate site.

This sequence belongs to the type-I 3-dehydroquinase family. As to quaternary structure, homodimer.

The enzyme catalyses 3-dehydroquinate = 3-dehydroshikimate + H2O. Its pathway is metabolic intermediate biosynthesis; chorismate biosynthesis; chorismate from D-erythrose 4-phosphate and phosphoenolpyruvate: step 3/7. Its function is as follows. Involved in the third step of the chorismate pathway, which leads to the biosynthesis of aromatic amino acids. Catalyzes the cis-dehydration of 3-dehydroquinate (DHQ) and introduces the first double bond of the aromatic ring to yield 3-dehydroshikimate. The protein is 3-dehydroquinate dehydratase of Desulfotalea psychrophila (strain LSv54 / DSM 12343).